The sequence spans 116 residues: Large ribosomal subunit protein uL18 (116 aa).

The protein belongs to the universal ribosomal protein uL18 family. As to quaternary structure, part of the 50S ribosomal subunit; part of the 5S rRNA/L5/L18/L25 subcomplex. Contacts the 5S and 23S rRNAs.

Its function is as follows. This is one of the proteins that bind and probably mediate the attachment of the 5S RNA into the large ribosomal subunit, where it forms part of the central protuberance. This is Large ribosomal subunit protein uL18 from Mycoplasma capricolum subsp. capricolum (strain California kid / ATCC 27343 / NCTC 10154).